Reading from the N-terminus, the 264-residue chain is Thymidylate synthase (264 aa).

Arg-21 provides a ligand contact to dUMP. Residue His-51 participates in (6R)-5,10-methylene-5,6,7,8-tetrahydrofolate binding. Position 126-127 (126-127 (RR)) interacts with dUMP. Cys-146 serves as the catalytic Nucleophile. DUMP contacts are provided by residues 166 to 169 (RSVD), Asn-177, and 207 to 209 (HLY). Asp-169 contributes to the (6R)-5,10-methylene-5,6,7,8-tetrahydrofolate binding site. Position 263 (Ala-263) interacts with (6R)-5,10-methylene-5,6,7,8-tetrahydrofolate.

It belongs to the thymidylate synthase family. Bacterial-type ThyA subfamily. In terms of assembly, homodimer.

Its subcellular location is the cytoplasm. It catalyses the reaction dUMP + (6R)-5,10-methylene-5,6,7,8-tetrahydrofolate = 7,8-dihydrofolate + dTMP. It functions in the pathway pyrimidine metabolism; dTTP biosynthesis. Its function is as follows. Catalyzes the reductive methylation of 2'-deoxyuridine-5'-monophosphate (dUMP) to 2'-deoxythymidine-5'-monophosphate (dTMP) while utilizing 5,10-methylenetetrahydrofolate (mTHF) as the methyl donor and reductant in the reaction, yielding dihydrofolate (DHF) as a by-product. This enzymatic reaction provides an intracellular de novo source of dTMP, an essential precursor for DNA biosynthesis. The chain is Thymidylate synthase from Geobacillus kaustophilus (strain HTA426).